The primary structure comprises 428 residues: Spliceosome RNA helicase DDX39B (428 aa).

The segment covering 1 to 19 has biased composition (acidic residues); sequence MAENDVDNELLDYEEDEVE. Positions 1-35 are disordered; the sequence is MAENDVDNELLDYEEDEVENAAGGDGSEAPPKKDV. A Q motif motif is present at residues 45–73; sequence SGFRDFLLKPELLRAIVDCGFEHPSEVQH. One can recognise a Helicase ATP-binding domain in the interval 76–249; the sequence is IPQAILGMDV…RKFMQDPMEI (174 aa). Residue 89-96 coordinates ATP; that stretch reads AKSGMGKT. Residues 196-199 carry the DECD box motif; the sequence is DECD. The Helicase C-terminal domain occupies 261 to 422; it reads GLQQYYVKLK…ELPDEIDISS (162 aa).

The protein belongs to the DEAD box helicase family. DECD subfamily. In terms of assembly, component of the transcription/export (TREX) complex at least composed of ALYREF/THOC4, DDX39B, SARNP/CIP29, CHTOP and the THO subcomplex.

It localises to the nucleus. It is found in the nucleus speckle. It catalyses the reaction ATP + H2O = ADP + phosphate + H(+). Functionally, involved in nuclear export of spliced and unspliced mRNA. Component of the TREX complex which is thought to couple mRNA transcription, processing and nuclear export, and specifically associates with spliced mRNA and not with unspliced pre-mRNA. The TREX complex is recruited to spliced mRNAs by a transcription-independent mechanism, binds to mRNA upstream of the exon-junction complex (EJC) and is recruited in a splicing- and cap-dependent manner to a region near the 5' end of the mRNA where it functions in mRNA export to the cytoplasm via the TAP/NXF1 pathway. Involved in transcription elongation and genome stability. Splice factor that is required for the first ATP-dependent step in spliceosome assembly and for the interaction of U2 snRNP with the branchpoint. Has both RNA-stimulated ATP binding/hydrolysis activity and ATP-dependent RNA unwinding activity. Even with the stimulation of RNA, the ATPase activity is weak. Can only hydrolyze ATP but not other NTPs. The RNA stimulation of ATPase activity does not have a strong preference for the sequence and length of the RNA. However, ssRNA stimulates the ATPase activity much more strongly than dsRNA. Can unwind 5' or 3' overhangs or blunt end RNA duplexes in vitro. The ATPase and helicase activities are not influenced by U2AF2; the effect of ALYREF/THOC4 is reported conflictingly. The chain is Spliceosome RNA helicase DDX39B (DDX39B) from Gallus gallus (Chicken).